The following is a 90-amino-acid chain: MSDAAVPPKKASPKKAAAKKASPKKAAAKKASPKKAAARKTAAKKTAKKPAVRKPAAKKRAAPKKKPAAAKKPAAKKAPKKAVKKAPKKK.

The interval 1–90 is disordered; the sequence is MSDAAVPPKK…KAVKKAPKKK (90 aa). Basic residues predominate over residues 11–90; the sequence is ASPKKAAAKK…KAVKKAPKKK (80 aa).

The protein localises to the nucleus. It is found in the chromosome. This chain is Histone H1.M6.2, found in Trypanosoma cruzi.